Here is a 263-residue protein sequence, read N- to C-terminus: Protein PUN1 (263 aa).

Over 1 to 6 (MRNFFT) the chain is Cytoplasmic. The chain crosses the membrane as a helical span at residues 7–27 (LFFAAIFSLGALILAIVACAG). The Extracellular portion of the chain corresponds to 28-143 (STKNYSPINK…MTYYNNLVKC (116 aa)). N100 is a glycosylation site (N-linked (GlcNAc...) asparagine). The helical transmembrane segment at 144–164 (MFITILIGIVLTFVNLVFNVL) threads the bilayer. The Cytoplasmic segment spans residues 165 to 172 (RWIIHIRP). The chain crosses the membrane as a helical span at residues 173 to 193 (LTWFGAFFSFFAFAALLVSIG). Residues 194 to 223 (SCLGTYSYIKYILKHNYSDYGISMSIGRNY) lie on the Extracellular side of the membrane. An N-linked (GlcNAc...) asparagine glycan is attached at N209. Residues 224 to 244 (QGLMWGAVVGALLNFILWCSV) form a helical membrane-spanning segment. Topologically, residues 245–263 (RSRPTVIYANAPIEEKPLI) are cytoplasmic. A Glycyl lysine isopeptide (Lys-Gly) (interchain with G-Cter in ubiquitin) cross-link involves residue K260.

This sequence belongs to the SUR7 family. In terms of processing, N-glycosylated.

The protein resides in the cell membrane. In terms of biological role, contributes to the wild-type cellular response to nitrogen stress through signaling pathways that regulate the expression of genes involved in amino acid biosynthesis. Required for wild-type filamentous growth, cell growth, and cell-cell adhesion. This chain is Protein PUN1 (PUN1), found in Saccharomyces cerevisiae (strain ATCC 204508 / S288c) (Baker's yeast).